The sequence spans 310 residues: Formimidoylglutamase (310 aa).

Mn(2+) contacts are provided by His120, Asp148, His150, Asp152, Asp233, and Asp235.

It belongs to the arginase family. It depends on Mn(2+) as a cofactor.

It carries out the reaction N-formimidoyl-L-glutamate + H2O = formamide + L-glutamate. Its pathway is amino-acid degradation; L-histidine degradation into L-glutamate; L-glutamate from N-formimidoyl-L-glutamate (hydrolase route): step 1/1. Functionally, catalyzes the conversion of N-formimidoyl-L-glutamate to L-glutamate and formamide. This Nocardia farcinica (strain IFM 10152) protein is Formimidoylglutamase.